Here is a 463-residue protein sequence, read N- to C-terminus: DNA polymerase subunit gamma-2, mitochondrial (463 aa).

Residues 1–44 (MLLTLKNTGQLLVAACSKVARSLAKYHPRVNHHRHCVWCSKRGL) constitute a mitochondrion transit peptide.

As to quaternary structure, heterotrimer composed of a catalytic subunit and a homodimer of accessory subunits.

Its subcellular location is the mitochondrion. Mitochondrial polymerase processivity subunit. It regulates the polymerase and exonuclease activities promoting processive DNA synthesis. Binds to ss-DNA. The chain is DNA polymerase subunit gamma-2, mitochondrial (polg2) from Xenopus laevis (African clawed frog).